The primary structure comprises 101 residues: Small ribosomal subunit protein uS14 (101 aa).

It belongs to the universal ribosomal protein uS14 family. In terms of assembly, part of the 30S ribosomal subunit. Contacts proteins S3 and S10.

Its function is as follows. Binds 16S rRNA, required for the assembly of 30S particles and may also be responsible for determining the conformation of the 16S rRNA at the A site. This is Small ribosomal subunit protein uS14 from Buchnera aphidicola subsp. Acyrthosiphon pisum (strain APS) (Acyrthosiphon pisum symbiotic bacterium).